Here is a 908-residue protein sequence, read N- to C-terminus: Translation initiation factor IF-2 (908 aa).

Residues 52 to 318 (QSHGQEEKRR…RSSQSSQHKF (267 aa)) are disordered. Polar residues predominate over residues 65 to 84 (KSKTTSTARVTGSSGKSKSV). 6 stretches are compositionally biased toward basic and acidic residues: residues 94 to 108 (FEKP…ELAA), 120 to 138 (AAKD…EERQ), 176 to 185 (IEVKPKDQPK), 193 to 238 (PKVE…EQMR), 270 to 280 (SFEKERREIKR), and 294 to 303 (KNQDEREIKN). The region spanning 409-578 (TRPPVVTIMG…SLQAELMELE (170 aa)) is the tr-type G domain. Residues 418–425 (GHVDHGKT) form a G1 region. 418–425 (GHVDHGKT) lines the GTP pocket. Residues 443-447 (GITQH) are G2. The G3 stretch occupies residues 464-467 (DTPG). Residues 464–468 (DTPGH) and 518–521 (NKMD) each bind GTP. The tract at residues 518-521 (NKMD) is G4. A G5 region spans residues 554–556 (SAK).

It belongs to the TRAFAC class translation factor GTPase superfamily. Classic translation factor GTPase family. IF-2 subfamily.

The protein localises to the cytoplasm. Its function is as follows. One of the essential components for the initiation of protein synthesis. Protects formylmethionyl-tRNA from spontaneous hydrolysis and promotes its binding to the 30S ribosomal subunits. Also involved in the hydrolysis of GTP during the formation of the 70S ribosomal complex. The chain is Translation initiation factor IF-2 from Psychrobacter cryohalolentis (strain ATCC BAA-1226 / DSM 17306 / VKM B-2378 / K5).